We begin with the raw amino-acid sequence, 83 residues long: Alpha-neurotoxin NTX-3 (83 aa).

Residues Met1 to Thr21 form the signal peptide. 4 disulfides stabilise this stretch: Cys24-Cys45, Cys38-Cys62, Cys64-Cys75, and Cys76-Cys81.

This sequence belongs to the three-finger toxin family. Short-chain subfamily. Type I alpha-neurotoxin sub-subfamily. In terms of tissue distribution, expressed by the venom gland.

The protein localises to the secreted. Its function is as follows. Binds to muscle nicotinic acetylcholine receptor (nAChR) and inhibit acetylcholine from binding to the receptor, thereby impairing neuromuscular transmission. In Naja sputatrix (Malayan spitting cobra), this protein is Alpha-neurotoxin NTX-3.